A 464-amino-acid chain; its full sequence is Argininosuccinate lyase (464 aa).

This sequence belongs to the lyase 1 family. Argininosuccinate lyase subfamily.

It is found in the cytoplasm. The enzyme catalyses 2-(N(omega)-L-arginino)succinate = fumarate + L-arginine. It participates in amino-acid biosynthesis; L-arginine biosynthesis; L-arginine from L-ornithine and carbamoyl phosphate: step 3/3. This chain is Argininosuccinate lyase, found in Stutzerimonas stutzeri (strain A1501) (Pseudomonas stutzeri).